Reading from the N-terminus, the 118-residue chain is Succinate dehydrogenase assembly factor 4, mitochondrial (118 aa).

The N-terminal 30 residues, 1–30 (MQSVTRQTARVLPQMGKQVSYLSTSGAWRA), are a transit peptide targeting the mitochondrion. Residues 65–118 (GKLDEFSRHPYQEKEPLKPWPNQTNPYTGEIGGPAGPEPTRYGDWERKGRVSDF) form a disordered region. Basic and acidic residues-rich tracts occupy residues 66-81 (KLDE…KEPL) and 105-118 (RYGD…VSDF).

This sequence belongs to the SDHAF4 family. In terms of assembly, interacts with SdhA in its FAD-bound form.

Its subcellular location is the mitochondrion matrix. Its function is as follows. Plays an essential role in the assembly of succinate dehydrogenase (SDH), an enzyme complex (also referred to as respiratory complex II) that is a component of both the tricarboxylic acid (TCA) cycle and the mitochondrial electron transport chain, and which couples the oxidation of succinate to fumarate with the reduction of ubiquinone (coenzyme Q) to ubiquinol. Binds to the flavoprotein subunit SdhA in its FAD-bound form, blocking the generation of excess reactive oxygen species (ROS) and facilitating its assembly with the iron-sulfur protein subunit SdhB into the SDH catalytic dimer. The protein is Succinate dehydrogenase assembly factor 4, mitochondrial of Drosophila melanogaster (Fruit fly).